The primary structure comprises 62 residues: Venom peptide 6 (62 aa).

Positions 1-26 (MKSTSVFILFAGIAIMACLQMTGTEA) are cleaved as a signal peptide. AXPX repeat units follow at residues 26-29 (AAPS), 30-33 (ASPN), and 40-43 (ADPD). Residues 27–46 (APSASPNPTPVARADPDPEA) constitute a propeptide that is removed on maturation.

Belongs to the MCD family. As to expression, expressed by the venom gland.

It is found in the secreted. Its subcellular location is the target cell membrane. In terms of biological role, antimicrobial peptide with strong activity against the fungus B.cinerea (MIC=5 uM) and the Gram-positive bacterium S.aureus (MIC=50 uM), and no activity against C.albicans (MIC&gt;200 uM), and the Gram-negative bacterium E.coli (MIC&gt;200 uM). Shows cytolytic activity against insect cell lines. Has no hemolytic activity against human erythrocytes. In vivo, peptide injection in the vicinity of the head and thorax of lepidopteran larvae induces feeding disorder that lasts one or two days before recovering. The polypeptide is Venom peptide 6 (Eumenes pomiformis (Potter wasp)).